The sequence spans 205 residues: Urease accessory protein UreG (205 aa).

Residue 11–18 participates in GTP binding; it reads GPVGSGKT.

This sequence belongs to the SIMIBI class G3E GTPase family. UreG subfamily. In terms of assembly, homodimer. UreD, UreF and UreG form a complex that acts as a GTP-hydrolysis-dependent molecular chaperone, activating the urease apoprotein by helping to assemble the nickel containing metallocenter of UreC. The UreE protein probably delivers the nickel.

It is found in the cytoplasm. Its function is as follows. Facilitates the functional incorporation of the urease nickel metallocenter. This process requires GTP hydrolysis, probably effectuated by UreG. The chain is Urease accessory protein UreG from Prochlorococcus marinus (strain NATL2A).